Reading from the N-terminus, the 216-residue chain is Pyrophosphatase PpaX (216 aa).

Residue Asp9 is the Nucleophile of the active site.

This sequence belongs to the HAD-like hydrolase superfamily. PpaX family. It depends on Mg(2+) as a cofactor.

It carries out the reaction diphosphate + H2O = 2 phosphate + H(+). In terms of biological role, hydrolyzes pyrophosphate formed during P-Ser-HPr dephosphorylation by HPrK/P. Might play a role in controlling the intracellular pyrophosphate pool. This chain is Pyrophosphatase PpaX, found in Bacillus thuringiensis (strain Al Hakam).